A 380-amino-acid polypeptide reads, in one-letter code: Methenyltetrahydrofolate synthase domain-containing protein (380 aa).

A compositionally biased stretch (basic and acidic residues) spans 245–258; it reads EEQAGKDVTLRDGP. 2 disordered regions span residues 245 to 283 and 361 to 380; these read EEQA…PLSS and LVGS…IAGP. The RRM domain occupies 282–355; the sequence is SSVQIGNLPR…NTVRVVLARQ (74 aa).

This Bos taurus (Bovine) protein is Methenyltetrahydrofolate synthase domain-containing protein (MTHFSD).